A 357-amino-acid polypeptide reads, in one-letter code: Phenylalanine--tRNA ligase alpha subunit (357 aa).

Glu-259 is a Mg(2+) binding site.

This sequence belongs to the class-II aminoacyl-tRNA synthetase family. Phe-tRNA synthetase alpha subunit type 1 subfamily. As to quaternary structure, tetramer of two alpha and two beta subunits. The cofactor is Mg(2+).

The protein localises to the cytoplasm. It carries out the reaction tRNA(Phe) + L-phenylalanine + ATP = L-phenylalanyl-tRNA(Phe) + AMP + diphosphate + H(+). The chain is Phenylalanine--tRNA ligase alpha subunit from Jannaschia sp. (strain CCS1).